The following is a 95-amino-acid chain: Acylphosphatase (95 aa).

The region spanning 8–95 (RVSARITGRV…DAFEGFRVRR (88 aa)) is the Acylphosphatase-like domain. Catalysis depends on residues Arg-23 and Asn-41.

It belongs to the acylphosphatase family.

It carries out the reaction an acyl phosphate + H2O = a carboxylate + phosphate + H(+). This Salinibacter ruber (strain DSM 13855 / M31) protein is Acylphosphatase (acyP).